A 415-amino-acid polypeptide reads, in one-letter code: Beta-1,4-glucuronyltransferase 1 (415 aa).

Topologically, residues 1–8 (MQMSYAIR) are cytoplasmic. The chain crosses the membrane as a helical; Signal-anchor for type II membrane protein span at residues 9–36 (CAFYQLLLAALMLVAMLQLLYLSLLSGL). Topologically, residues 37-415 (HGQEEQEQYF…ARYPNSPHRC (379 aa)) are lumenal. N-linked (GlcNAc...) asparagine glycosylation occurs at asparagine 204. Mn(2+)-binding residues include aspartate 227 and aspartate 229. Residue asparagine 300 is glycosylated (N-linked (GlcNAc...) asparagine).

It belongs to the glycosyltransferase 49 family. Interacts with LARGE1 and LARGE2. Mn(2+) serves as cofactor.

The protein resides in the golgi apparatus membrane. The enzyme catalyses 3-O-[beta-D-Xyl-(1-&gt;4)-Rib-ol-P-Rib-ol-P-3-beta-D-GalNAc-(1-&gt;3)-beta-D-GlcNAc-(1-&gt;4)-(O-6-P-alpha-D-Man)]-Thr-[protein] + UDP-alpha-D-glucuronate = 3-O-[beta-D-GlcA-(1-&gt;3)-beta-D-Xyl-(1-&gt;4)-Rib-ol-P-Rib-ol-P-3-beta-D-GalNAc-(1-&gt;3)-beta-D-GlcNAc-(1-&gt;4)-(O-6-P-alpha-D-Man)]-Thr-[protein] + UDP + H(+). The protein operates within protein modification; protein glycosylation. Its function is as follows. Beta-1,4-glucuronyltransferase involved in O-mannosylation of alpha-dystroglycan (DAG1). Transfers a glucuronic acid (GlcA) residue onto a xylose (Xyl) acceptor to produce the glucuronyl-beta-1,4-xylose-beta disaccharide primer, which is further elongated by LARGE1, during synthesis of phosphorylated O-mannosyl glycan. Phosphorylated O-mannosyl glycan is a carbohydrate structure present in alpha-dystroglycan (DAG1), which is required for binding laminin G-like domain-containing extracellular proteins with high affinity. Required for axon guidance; via its function in O-mannosylation of alpha-dystroglycan (DAG1). This is Beta-1,4-glucuronyltransferase 1 from Mus musculus (Mouse).